Here is a 31-residue protein sequence, read N- to C-terminus: Photosystem I reaction center subunit XII (31 aa).

A helical transmembrane segment spans residues 7–26; that stretch reads QVYIALLTALIPAFFALKLG.

The protein belongs to the PsaM family.

The protein localises to the plastid. It localises to the chloroplast thylakoid membrane. The sequence is that of Photosystem I reaction center subunit XII from Euglena viridis (Cercaria viridis).